Reading from the N-terminus, the 95-residue chain is Small ribosomal subunit protein bS20c (95 aa).

The tract at residues 76-95 (NGSAKKAKLTKRLKEKKISL) is disordered. A compositionally biased stretch (basic residues) spans 80–95 (KKAKLTKRLKEKKISL).

Belongs to the bacterial ribosomal protein bS20 family.

Its subcellular location is the plastid. The protein localises to the chloroplast. Binds directly to 16S ribosomal RNA. The protein is Small ribosomal subunit protein bS20c of Guillardia theta (Cryptophyte).